The following is a 529-amino-acid chain: Bifunctional purine biosynthesis protein PurH (529 aa).

The MGS-like domain occupies 1–148 (MQQPRPVRRA…KNHKDVAIVV (148 aa)).

The protein belongs to the PurH family.

The catalysed reaction is (6R)-10-formyltetrahydrofolate + 5-amino-1-(5-phospho-beta-D-ribosyl)imidazole-4-carboxamide = 5-formamido-1-(5-phospho-D-ribosyl)imidazole-4-carboxamide + (6S)-5,6,7,8-tetrahydrofolate. It catalyses the reaction IMP + H2O = 5-formamido-1-(5-phospho-D-ribosyl)imidazole-4-carboxamide. Its pathway is purine metabolism; IMP biosynthesis via de novo pathway; 5-formamido-1-(5-phospho-D-ribosyl)imidazole-4-carboxamide from 5-amino-1-(5-phospho-D-ribosyl)imidazole-4-carboxamide (10-formyl THF route): step 1/1. The protein operates within purine metabolism; IMP biosynthesis via de novo pathway; IMP from 5-formamido-1-(5-phospho-D-ribosyl)imidazole-4-carboxamide: step 1/1. The polypeptide is Bifunctional purine biosynthesis protein PurH (Cronobacter sakazakii (strain ATCC BAA-894) (Enterobacter sakazakii)).